Here is a 215-residue protein sequence, read N- to C-terminus: N-(5'-phosphoribosyl)anthranilate isomerase (215 aa).

Belongs to the TrpF family.

The enzyme catalyses N-(5-phospho-beta-D-ribosyl)anthranilate = 1-(2-carboxyphenylamino)-1-deoxy-D-ribulose 5-phosphate. Its pathway is amino-acid biosynthesis; L-tryptophan biosynthesis; L-tryptophan from chorismate: step 3/5. This chain is N-(5'-phosphoribosyl)anthranilate isomerase (trpF), found in Bacillus subtilis (strain 168).